The sequence spans 57 residues: Enolase (57 aa).

Glu25 serves as the catalytic Proton donor.

This sequence belongs to the enolase family. It depends on Mg(2+) as a cofactor.

It is found in the cytoplasm. Its subcellular location is the secreted. The protein localises to the cell surface. It catalyses the reaction (2R)-2-phosphoglycerate = phosphoenolpyruvate + H2O. It participates in carbohydrate degradation; glycolysis; pyruvate from D-glyceraldehyde 3-phosphate: step 4/5. In terms of biological role, catalyzes the reversible conversion of 2-phosphoglycerate (2-PG) into phosphoenolpyruvate (PEP). It is essential for the degradation of carbohydrates via glycolysis. The protein is Enolase of Clostridioides difficile (Peptoclostridium difficile).